Consider the following 471-residue polypeptide: NADH-quinone oxidoreductase subunit N (471 aa).

14 helical membrane-spanning segments follow: residues Phe-6–Tyr-26, Ser-30–Phe-50, Leu-70–Thr-90, Ile-98–Ile-118, Leu-123–Phe-143, Phe-158–Phe-178, Leu-198–Phe-218, Pro-230–Ile-250, Trp-264–Ile-284, Leu-292–Ser-312, Ile-320–Leu-340, Leu-365–Ala-385, Phe-400–Ile-420, and Ile-438–Pro-458.

Belongs to the complex I subunit 2 family. As to quaternary structure, NDH-1 is composed of 14 different subunits. Subunits NuoA, H, J, K, L, M, N constitute the membrane sector of the complex.

Its subcellular location is the cell inner membrane. The catalysed reaction is a quinone + NADH + 5 H(+)(in) = a quinol + NAD(+) + 4 H(+)(out). Its function is as follows. NDH-1 shuttles electrons from NADH, via FMN and iron-sulfur (Fe-S) centers, to quinones in the respiratory chain. The immediate electron acceptor for the enzyme in this species is believed to be ubiquinone. Couples the redox reaction to proton translocation (for every two electrons transferred, four hydrogen ions are translocated across the cytoplasmic membrane), and thus conserves the redox energy in a proton gradient. This is NADH-quinone oxidoreductase subunit N from Pelagibacter ubique (strain HTCC1062).